A 933-amino-acid chain; its full sequence is Exosome complex exonuclease RRP44 homolog A (933 aa).

Residues 50–163 (KIIVVDTNVV…LVTNDRENKR (114 aa)) form the PINc domain. Residues 217–321 (QEHKPMSEIT…NVDDAPRTSN (105 aa)) form the CSD1 domain. The segment at 296-336 (AEEDDEEDDTVHLAPDNVDDAPRTSNLSHETSGDKNAAPVR) is disordered. In terms of domain architecture, CSD2 spans 371–438 (ALFVSKDRRI…ETEVVLIEND (68 aa)). The 330-residue stretch at 469-798 (RQDLRHLLVF…FVHRLLAASL (330 aa)) folds into the RNB domain. Mg(2+) is bound by residues Asp-481 and Asp-490.

This sequence belongs to the RNR ribonuclease family. Probable component of the RNA exosome complex. The cofactor is Mg(2+).

Its subcellular location is the nucleus. Its function is as follows. Catalytic component of the RNA exosome complex which has 3'-&gt;5' exoribonuclease activity and participates in a multitude of cellular RNA processing and degradation events. Required for 5.8S rRNA intermediate processing and the degradation of 5' external transcribed spacer (5' ETS), a maturation by-product of rRNA synthesis. Is not involved in the degradation of turnip crinkle virus (TCV) RNA and significant virus resistance. Required for normal development of female gametophytes and early embryogenesis. This is Exosome complex exonuclease RRP44 homolog A from Arabidopsis thaliana (Mouse-ear cress).